Reading from the N-terminus, the 383-residue chain is tRNA-specific 2-thiouridylase MnmA (383 aa).

Residues 29–36 (GMSGGVDS) and methionine 55 contribute to the ATP site. The interval 115 to 117 (NPD) is interaction with target base in tRNA. Cysteine 120 (nucleophile) is an active-site residue. Residues cysteine 120 and cysteine 217 are joined by a disulfide bond. An ATP-binding site is contributed by glycine 145. The tract at residues 167 to 169 (KDQ) is interaction with tRNA. The Cysteine persulfide intermediate role is filled by cysteine 217. Residues 329 to 330 (RY) form an interaction with tRNA region.

The protein belongs to the MnmA/TRMU family.

The protein localises to the cytoplasm. The catalysed reaction is S-sulfanyl-L-cysteinyl-[protein] + uridine(34) in tRNA + AH2 + ATP = 2-thiouridine(34) in tRNA + L-cysteinyl-[protein] + A + AMP + diphosphate + H(+). Functionally, catalyzes the 2-thiolation of uridine at the wobble position (U34) of tRNA, leading to the formation of s(2)U34. In Histophilus somni (strain 2336) (Haemophilus somnus), this protein is tRNA-specific 2-thiouridylase MnmA.